Consider the following 220-residue polypeptide: Iron-sulfur cluster repair protein YtfE (220 aa).

This sequence belongs to the RIC family. YtfE subfamily. In terms of assembly, homodimer.

It localises to the cytoplasm. Di-iron-containing protein involved in the repair of iron-sulfur clusters damaged by oxidative and nitrosative stress conditions. The chain is Iron-sulfur cluster repair protein YtfE from Escherichia coli O6:K15:H31 (strain 536 / UPEC).